We begin with the raw amino-acid sequence, 400 residues long: Mu-type opioid receptor (400 aa).

The Extracellular segment spans residues 1 to 68; the sequence is MDSSAVPTNA…CPPTGSPSMI (68 aa). N-linked (GlcNAc...) asparagine glycans are attached at residues asparagine 9, asparagine 12, asparagine 33, asparagine 40, and asparagine 48. A helical membrane pass occupies residues 69-93; that stretch reads TAITIMALYSIVCVVGLFGNFLVMY. The Cytoplasmic segment spans residues 94-106; it reads VIVRYTKMKTATN. A helical transmembrane segment spans residues 107–131; the sequence is IYIFNLALADALVTSTLPFQSVNYL. Over 132-142 the chain is Extracellular; it reads MGTWPFGTILC. A disulfide bond links cysteine 142 and cysteine 219. The helical transmembrane segment at 143–165 threads the bilayer; that stretch reads KIVISIDYYNMSTSIFTLCTMSV. Over 166-185 the chain is Cytoplasmic; the sequence is DRYIAVCHPVKALDFRTPRN. Phosphotyrosine is present on tyrosine 168. A helical transmembrane segment spans residues 186 to 207; sequence AKIINVCNWILSSAIGLPVMFM. The Extracellular segment spans residues 208–230; sequence ATTKYRQGSIDCTLTFSHPSWYW. A helical membrane pass occupies residues 231-255; the sequence is ENLLKICVFIFAFIMPVLIITVCYG. Residues 256-283 lie on the Cytoplasmic side of the membrane; that stretch reads LMILRLKSVRMLSGSKEKDRNLRRITRM. A helical membrane pass occupies residues 284-306; the sequence is VLVVVAVFIICWTPIHIYVIIKA. Residues 307-314 are Extracellular-facing; sequence LVTIPETT. The helical transmembrane segment at 315–338 threads the bilayer; sequence FQTVSWHFCIALGYTNSCLNPVLY. The NPxxY; plays a role in stabilizing the activated conformation of the receptor motif lies at 334–338; it reads NPVLY. Topologically, residues 339-400 are cytoplasmic; the sequence is AFLDEDFKRC…NLEAETAPLP (62 aa). Residue cysteine 353 is the site of S-palmitoyl cysteine attachment. The disordered stretch occupies residues 364–386; it reads NSTRIRQNTRDHPSTANTVDRTN. Serine 365 carries the phosphoserine modification. Threonine 372 carries the post-translational modification Phosphothreonine. Serine 377 bears the Phosphoserine mark. Phosphothreonine is present on threonine 396.

Belongs to the G-protein coupled receptor 1 family. As to quaternary structure, forms homooligomers and heterooligomers with other GPCRs, such as OPRD1, OPRK1, OPRL1, NPFFR2, ADRA2A, SSTR2, CNR1 and CCR5 (probably in dimeric forms). Interacts with heterotrimeric G proteins; interaction with a heterotrimeric complex containing GNAI1, GNB1 and GNG2 stabilizes the active conformation of the receptor and increases its affinity for endomorphin-2, the synthetic opioid peptide DAMGO and for morphinan agonists. Interacts with PPL; the interaction disrupts agonist-mediated G-protein activation. Interacts (via C-terminus) with DNAJB4 (via C-terminus). Interacts with calmodulin; the interaction inhibits the constitutive activity of OPRM1; it abolishes basal and attenuates agonist-stimulated G-protein coupling. Interacts with FLNA, PLD2, RANBP9 and WLS and GPM6A. Interacts with RTP4. Interacts with SYP and GNAS. Interacts with RGS9, RGS17, RGS20, RGS4, PPP1R9B and HINT1. In terms of processing, phosphorylated. Differentially phosphorylated in basal and agonist-induced conditions. Agonist-mediated phosphorylation modulates receptor internalization. Phosphorylated by GRK2 in a agonist-dependent manner. Phosphorylation at Tyr-168 requires receptor activation, is dependent on non-receptor protein tyrosine kinase Src and results in a decrease in agonist efficacy by reducing G-protein coupling efficiency. Phosphorylated on tyrosine residues; the phosphorylation is involved in agonist-induced G-protein-independent receptor down-regulation. Phosphorylation at Ser-377 is involved in G-protein-dependent but not beta-arrestin-dependent activation of the ERK pathway. Ubiquitinated. A basal ubiquitination seems not to be related to degradation. Ubiquitination is increased upon formation of OPRM1:OPRD1 oligomers leading to proteasomal degradation; the ubiquitination is diminished by RTP4.

It localises to the cell membrane. The protein localises to the cell projection. Its subcellular location is the axon. The protein resides in the perikaryon. It is found in the dendrite. It localises to the endosome. In terms of biological role, receptor for endogenous opioids such as beta-endorphin and endomorphin. Receptor for natural and synthetic opioids including morphine, heroin, DAMGO, fentanyl, etorphine, buprenorphin and methadone. Also activated by enkephalin peptides, such as Met-enkephalin or Met-enkephalin-Arg-Phe, with higher affinity for Met-enkephalin-Arg-Phe. Agonist binding to the receptor induces coupling to an inactive GDP-bound heterotrimeric G-protein complex and subsequent exchange of GDP for GTP in the G-protein alpha subunit leading to dissociation of the G-protein complex with the free GTP-bound G-protein alpha and the G-protein beta-gamma dimer activating downstream cellular effectors. The agonist- and cell type-specific activity is predominantly coupled to pertussis toxin-sensitive G(i) and G(o) G alpha proteins, GNAI1, GNAI2, GNAI3 and GNAO1, and to a lesser extent to pertussis toxin-insensitive G alpha proteins GNAZ and GNA15. They mediate an array of downstream cellular responses, including inhibition of adenylate cyclase activity and both N-type and L-type calcium channels, activation of inward rectifying potassium channels, mitogen-activated protein kinase (MAPK), phospholipase C (PLC), phosphoinositide/protein kinase (PKC), phosphoinositide 3-kinase (PI3K) and regulation of NF-kappa-B. Also couples to adenylate cyclase stimulatory G alpha proteins. The selective temporal coupling to G-proteins and subsequent signaling can be regulated by RGSZ proteins, such as RGS9, RGS17 and RGS4. Phosphorylation by members of the GPRK subfamily of Ser/Thr protein kinases and association with beta-arrestins is involved in short-term receptor desensitization. Beta-arrestins associate with the GPRK-phosphorylated receptor and uncouple it from the G-protein thus terminating signal transduction. The phosphorylated receptor is internalized through endocytosis via clathrin-coated pits which involves beta-arrestins. The activation of the ERK pathway occurs either in a G-protein-dependent or a beta-arrestin-dependent manner and is regulated by agonist-specific receptor phosphorylation. Acts as a class A G-protein coupled receptor (GPCR) which dissociates from beta-arrestin at or near the plasma membrane and undergoes rapid recycling. Receptor down-regulation pathways are varying with the agonist and occur dependent or independent of G-protein coupling. Endogenous ligands induce rapid desensitization, endocytosis and recycling. Heterooligomerization with other GPCRs can modulate agonist binding, signaling and trafficking properties. Involved in neurogenesis. The protein is Mu-type opioid receptor (OPRM1) of Macaca mulatta (Rhesus macaque).